The chain runs to 650 residues: Peroxisomal biogenesis factor 8 (650 aa).

Residues 648–650 carry the Microbody targeting signal motif; the sequence is AKL.

It localises to the peroxisome matrix. Functionally, essential for peroxisome biogenesis. May play a role in triggering the protein import competence of individual peroxisomes. It may interact with PEX10. The protein is Peroxisomal biogenesis factor 8 (PEX8) of Pichia angusta (Yeast).